Reading from the N-terminus, the 82-residue chain is Acyl carrier protein (82 aa).

In terms of domain architecture, Carrier spans 3–81 (LSREKVLESI…DAVDFIIAAK (79 aa)). S41 bears the O-(pantetheine 4'-phosphoryl)serine mark.

Belongs to the acyl carrier protein (ACP) family. In terms of processing, 4'-phosphopantetheine is transferred from CoA to a specific serine of apo-ACP by AcpS. This modification is essential for activity because fatty acids are bound in thioester linkage to the sulfhydryl of the prosthetic group.

Its subcellular location is the cytoplasm. The protein operates within lipid metabolism; fatty acid biosynthesis. In terms of biological role, carrier of the growing fatty acid chain in fatty acid biosynthesis. The protein is Acyl carrier protein of Tropheryma whipplei (strain Twist) (Whipple's bacillus).